Here is a 576-residue protein sequence, read N- to C-terminus: Arginine--tRNA ligase (576 aa).

Positions 126 to 136 (ANPTGPMHIGH) match the 'HIGH' region motif.

It belongs to the class-I aminoacyl-tRNA synthetase family. In terms of assembly, monomer.

It localises to the cytoplasm. It carries out the reaction tRNA(Arg) + L-arginine + ATP = L-arginyl-tRNA(Arg) + AMP + diphosphate. In Rickettsia felis (strain ATCC VR-1525 / URRWXCal2) (Rickettsia azadi), this protein is Arginine--tRNA ligase.